Reading from the N-terminus, the 741-residue chain is Catalase-peroxidase 2 (741 aa).

A signal peptide spans 1–27 (MKINTLPTLSALTLAMSLALGAGMATA). A cross-link (tryptophyl-tyrosyl-methioninium (Trp-Tyr) (with M-255)) is located at residues 106–229 (WHSAGVYRIF…MGATQMGLIY (124 aa)). The active-site Proton acceptor is the His107. The tryptophyl-tyrosyl-methioninium (Tyr-Met) (with W-106) cross-link spans 229 to 255 (YVNPEGPNGVPDPLASAKEIRDTFGRM). His270 provides a ligand contact to heme b.

This sequence belongs to the peroxidase family. Peroxidase/catalase subfamily. Homodimer or homotetramer. Heme b serves as cofactor. In terms of processing, formation of the three residue Trp-Tyr-Met cross-link is important for the catalase, but not the peroxidase activity of the enzyme.

It catalyses the reaction H2O2 + AH2 = A + 2 H2O. It carries out the reaction 2 H2O2 = O2 + 2 H2O. Its function is as follows. Bifunctional enzyme with both catalase and broad-spectrum peroxidase activity. This Shewanella oneidensis (strain ATCC 700550 / JCM 31522 / CIP 106686 / LMG 19005 / NCIMB 14063 / MR-1) protein is Catalase-peroxidase 2.